The following is a 512-amino-acid chain: Sporulation-regulated protein 3 (512 aa).

The disordered stretch occupies residues 31 to 68; the sequence is RQSSQGQYAVDSHPPKSPELKHRRQRSSSFVNGKCRNR. Residues 106-365 form the Septin-type G domain; it reads NGIDFTLMVA…EKCRSEMLRT (260 aa). The interval 116 to 123 is G1 motif; it reads GQSGLGKT. GTP is bound by residues 116–123, glycine 168, 247–255, and arginine 315; these read GQSGLGKT and KSDLLTKEE. A G3 motif region spans residues 165–168; the sequence is DTPG. The segment at 246–249 is G4 motif; that stretch reads AKSD. 2 coiled-coil regions span residues 376–406 and 451–496; these read TKSV…LKNY and RDWK…KSSN.

It belongs to the TRAFAC class TrmE-Era-EngA-EngB-Septin-like GTPase superfamily. Septin GTPase family. In terms of assembly, interacts with other septin proteins such as SPR28 to form a ring at the bud neck.

It is found in the prospore membrane. Its subcellular location is the bud neck. In terms of biological role, septins are GTPases involved in cytokinesis that assemble into filaments and form a ring at the cleavage site. May act by recruiting MYO1 and HOF1, a protein involved in septation, to the site of cleavage. Septins are also involved in cell morphogenesis, bud site selection, chitin deposition, cell cycle regulation, cell compartmentalization and spore wall formation. The polypeptide is Sporulation-regulated protein 3 (SPR3) (Saccharomyces cerevisiae (strain ATCC 204508 / S288c) (Baker's yeast)).